We begin with the raw amino-acid sequence, 721 residues long: MSENKCPMHHSAGGTTNRDWWPKQLRLDILHQHSSLSNPMGDDFNYAEAFKSLDLAAVKQDLLALMTDSQDWWPADFGHYGPLFIRMAWHSAGTYRTGDGRGGAGSGNQRFAPLNSWPDNVSLDKARRLIWPIKQKYGNKISWADLIVLTGNVALESMGFKTLGFAGGRVDIWEPEADIYWGAEDKWLDDKRYSGERDLEDPLAAVQMGLIYVNPEGPNGDPDPFAAAVDIRETFARMAMNDEETVALIAGGHTFGKTHGAGDAALVGPEPEAASIEQQGLGWKSSYKSGKGGDAISSGLEVTWTSTPTQWSNNFFENLFGYEWELTKSPAGAHQWIPKNGAGKGVIPDAHDASKRHVPAMLTTDLALIFDPDYEKISRRLFENPDEFAEIFAKAWYKLTHRDMGPCTRYLGPEVPAEEFLWQDPIPAVDHPLVDEQDVTDLKLKIIGSGLTISEVVATAWASASTYRGSDMRGGANGARIRLAPQKDWPVNQPEQLAKVLKVLESIQSEFNKSGKKISLADLIVLAGCVGIDQAARNAGVEVTIPFTPGRMDATQAQTDVESFAVLEPVADGFRNYHPTQFSVSAEELLVDRAQLLTLTAPEMTVLIGGLRVLDTNADQSKTGVFTARPEFLTNDFFVNLLDMGTTWKPTSKAEDRFEGVDRVSGQPKWTASRVDLIFGSNSQLRALAEVYASSDAQLRFIDDFIAAWTKVMNLDRFDLR.

A cross-link (tryptophyl-tyrosyl-methioninium (Trp-Tyr) (with M-238)) is located at residues 89–212 (WHSAGTYRTG…LAAVQMGLIY (124 aa)). The active-site Proton acceptor is H90. A cross-link (tryptophyl-tyrosyl-methioninium (Tyr-Met) (with W-89)) is located at residues 212–238 (YVNPEGPNGDPDPFAAAVDIRETFARM). Heme b is bound at residue H253.

Belongs to the peroxidase family. Peroxidase/catalase subfamily. In terms of assembly, homodimer or homotetramer. Heme b is required as a cofactor. Formation of the three residue Trp-Tyr-Met cross-link is important for the catalase, but not the peroxidase activity of the enzyme.

The enzyme catalyses H2O2 + AH2 = A + 2 H2O. The catalysed reaction is 2 H2O2 = O2 + 2 H2O. Functionally, bifunctional enzyme with both catalase and broad-spectrum peroxidase activity. This chain is Catalase-peroxidase, found in Shewanella baltica (strain OS195).